A 466-amino-acid polypeptide reads, in one-letter code: Eukaryotic translation initiation factor 3 subunit M (466 aa).

Residues 40-62 (EISPLLEPLRQQEQSDAEPDRKQ) form a disordered region. Residues 211–378 (AQTHILQALQ…SEFLVHRATY (168 aa)) enclose the PCI domain. Residues 424 to 466 (AAEEAAQGKSNDKGNKSGDRRQRHGNNQQSQQQQQPQEVAAAE) form a disordered region. Residues 433–443 (SNDKGNKSGDR) are compositionally biased toward basic and acidic residues. Residues 451 to 460 (QQSQQQQQPQ) show a composition bias toward low complexity.

This sequence belongs to the eIF-3 subunit M family. As to quaternary structure, component of the eukaryotic translation initiation factor 3 (eIF-3) complex.

Its subcellular location is the cytoplasm. In terms of biological role, component of the eukaryotic translation initiation factor 3 (eIF-3) complex, which is involved in protein synthesis of a specialized repertoire of mRNAs and, together with other initiation factors, stimulates binding of mRNA and methionyl-tRNAi to the 40S ribosome. The eIF-3 complex specifically targets and initiates translation of a subset of mRNAs involved in cell proliferation. The polypeptide is Eukaryotic translation initiation factor 3 subunit M (Aspergillus oryzae (strain ATCC 42149 / RIB 40) (Yellow koji mold)).